Here is a 557-residue protein sequence, read N- to C-terminus: Probable asparagine synthetase [glutamine-hydrolyzing] (557 aa).

The active-site For GATase activity is Cys2. One can recognise a Glutamine amidotransferase type-2 domain in the interval 2–188 (CGILAVHHVA…PGHYYDSETK (187 aa)). L-glutamine contacts are provided by residues 50 to 54 (RLAIV), 75 to 77 (NGE), and Asp99. The Asparagine synthetase domain occupies 196–531 (PSWWDENKIP…PRQCADTVMR (336 aa)). Residues Leu235, Ile280, and 354 to 355 (SG) each bind ATP. Ser391 and Ser489 each carry phosphoserine.

The protein resides in the cytoplasm. It is found in the nucleus. The enzyme catalyses L-aspartate + L-glutamine + ATP + H2O = L-asparagine + L-glutamate + AMP + diphosphate + H(+). It participates in amino-acid biosynthesis; L-asparagine biosynthesis; L-asparagine from L-aspartate (L-Gln route): step 1/1. This Schizosaccharomyces pombe (strain 972 / ATCC 24843) (Fission yeast) protein is Probable asparagine synthetase [glutamine-hydrolyzing] (asn1).